A 73-amino-acid polypeptide reads, in one-letter code: Putative beta-defensin 108A (73 aa).

The signal sequence occupies residues 1-22 (MRIAVLFFTIFFFMSQVLPAKG). 3 disulfide bridges follow: Cys28/Cys55, Cys35/Cys49, and Cys39/Cys56.

This sequence belongs to the beta-defensin family.

It is found in the secreted. Functionally, has antibacterial activity. The sequence is that of Putative beta-defensin 108A from Homo sapiens (Human).